The primary structure comprises 163 residues: Large ribosomal subunit protein uL10 (163 aa).

Belongs to the universal ribosomal protein uL10 family. In terms of assembly, part of the ribosomal stalk of the 50S ribosomal subunit. The N-terminus interacts with L11 and the large rRNA to form the base of the stalk. The C-terminus forms an elongated spine to which L12 dimers bind in a sequential fashion forming a multimeric L10(L12)X complex.

Functionally, forms part of the ribosomal stalk, playing a central role in the interaction of the ribosome with GTP-bound translation factors. In Pasteurella multocida (strain Pm70), this protein is Large ribosomal subunit protein uL10 (rplJ).